The chain runs to 194 residues: MILKKILPYSKELLKMAAGEGDIVVDATMGNGHDTQFLAELVGENGHVYAFDIQESAVANTKERLGDMYQARTTLFHKSHDKIAESLPPETHGKVAAAVFNLGYLPGGDKSITTNGSSTIKAIEQLLSIMKDEGLIVLVVYHGHPEGKAEKNDVLEFCRDLDQQTARVLTYGFINQQNDPPFIVAIEKKAQISK.

6 residues coordinate S-adenosyl-L-methionine: His33, Asp34, Asp52, Gln54, Ser79, and His80.

Belongs to the methyltransferase superfamily. MnmM family. Homodimer.

The enzyme catalyses 5-aminomethyl-2-thiouridine(34) in tRNA + S-adenosyl-L-methionine = 5-methylaminomethyl-2-thiouridine(34) in tRNA + S-adenosyl-L-homocysteine + H(+). It functions in the pathway tRNA modification. Its function is as follows. Involved in the biosynthesis of 5-methylaminomethyl-2-thiouridine (mnm(5)s(2)U) at the wobble position (U34) in tRNA. Catalyzes the transfer of a methyl group from S-adenosyl-L-methionine to nm(5)s(2)U34 to form mnm(5)s(2)U34. In Bacillus subtilis (strain 168), this protein is tRNA (mnm(5)s(2)U34)-methyltransferase.